Reading from the N-terminus, the 313-residue chain is Protein FixB (313 aa).

An FAD-binding site is contributed by 255–283; it reads LYLAVGISGQIQHMVGANASQTIFAINKD.

This sequence belongs to the ETF alpha-subunit/FixB family. In terms of assembly, heterodimer of FixA and FixB.

The protein operates within amine and polyamine metabolism; carnitine metabolism. Its function is as follows. Required for anaerobic carnitine reduction. May bring reductant to CaiA. In Shigella dysenteriae serotype 1 (strain Sd197), this protein is Protein FixB.